We begin with the raw amino-acid sequence, 577 residues long: Arginine--tRNA ligase (577 aa).

Positions 122-132 (PNVAKEMHVGH) match the 'HIGH' region motif.

This sequence belongs to the class-I aminoacyl-tRNA synthetase family. As to quaternary structure, monomer.

Its subcellular location is the cytoplasm. The catalysed reaction is tRNA(Arg) + L-arginine + ATP = L-arginyl-tRNA(Arg) + AMP + diphosphate. The chain is Arginine--tRNA ligase from Escherichia coli O81 (strain ED1a).